The sequence spans 301 residues: LHMIHLHWYQYPPMNPMMYPLLLVFMLITGILCLAGNFVTIWVFMNTKSLRTPANLLVVNLAMSDFLMMFTMFPPMMITCYYHTWTLGATFCEVYAFLGNLCGCASIWTMVFITFDRYNVIVKGVAGEPLSTKKASLWILTVWVLSFTWCVAPFFGWNRYVPEGNLTGCGTDYLSEDILSRSYLYIYSTWVYFLPLAITIYCYVFIIKAVAAHEKGMRDQAKKMGIKSLRNEEAQKTSAECRLAKIAMTTVALWFIAWTPYLLINWVGMFARSYLSPVYTIWGYVFAKANAVYNPIVYAIS.

Topologically, residues 1 to 18 are extracellular; it reads LHMIHLHWYQYPPMNPMM. The helical transmembrane segment at 19–43 threads the bilayer; sequence YPLLLVFMLITGILCLAGNFVTIWV. Residues 44–55 lie on the Cytoplasmic side of the membrane; that stretch reads FMNTKSLRTPAN. The helical transmembrane segment at 56 to 78 threads the bilayer; it reads LLVVNLAMSDFLMMFTMFPPMMI. At 79–92 the chain is on the extracellular side; the sequence is TCYYHTWTLGATFC. Cys-92 and Cys-169 are disulfide-bonded. A helical transmembrane segment spans residues 93 to 115; the sequence is EVYAFLGNLCGCASIWTMVFITF. The 'Ionic lock' involved in activated form stabilization signature appears at 116–118; sequence DRY. At 116-134 the chain is on the cytoplasmic side; the sequence is DRYNVIVKGVAGEPLSTKK. Residues 135 to 155 form a helical membrane-spanning segment; sequence ASLWILTVWVLSFTWCVAPFF. Topologically, residues 156 to 182 are extracellular; sequence GWNRYVPEGNLTGCGTDYLSEDILSRS. The N-linked (GlcNAc...) asparagine glycan is linked to Asn-165. The chain crosses the membrane as a helical span at residues 183-204; sequence YLYIYSTWVYFLPLAITIYCYV. The Cytoplasmic portion of the chain corresponds to 205–245; that stretch reads FIIKAVAAHEKGMRDQAKKMGIKSLRNEEAQKTSAECRLAK. The chain crosses the membrane as a helical span at residues 246–267; sequence IAMTTVALWFIAWTPYLLINWV. At 268 to 278 the chain is on the extracellular side; the sequence is GMFARSYLSPV. The helical transmembrane segment at 279–300 threads the bilayer; sequence YTIWGYVFAKANAVYNPIVYAI. Lys-288 carries the post-translational modification N6-(retinylidene)lysine.

Belongs to the G-protein coupled receptor 1 family. Opsin subfamily. In terms of assembly, homodimer. Interacts with GNAQ. In terms of processing, contains one covalently linked retinal chromophore.

Its subcellular location is the cell projection. The protein localises to the rhabdomere membrane. Its function is as follows. Photoreceptor required for image-forming vision at low light intensity. Can use both retinal and 3-dehydroretinal as visual pigment. Light-induced isomerization of 11-cis to all-trans retinal triggers a conformational change that activates signaling via G-proteins. Signaling via GNAQ probably mediates the activation of phospholipase C. In Lacunicambarus ludovicianus (Painted devil crayfish), this protein is Rhodopsin (RHO).